Here is a 341-residue protein sequence, read N- to C-terminus: Uroporphyrinogen decarboxylase (341 aa).

Substrate is bound by residues 23-27 (RQAGR), aspartate 73, tyrosine 147, serine 202, and histidine 318.

The protein belongs to the uroporphyrinogen decarboxylase family. Homodimer.

The protein localises to the cytoplasm. It catalyses the reaction uroporphyrinogen III + 4 H(+) = coproporphyrinogen III + 4 CO2. It functions in the pathway porphyrin-containing compound metabolism; protoporphyrin-IX biosynthesis; coproporphyrinogen-III from 5-aminolevulinate: step 4/4. In terms of biological role, catalyzes the decarboxylation of four acetate groups of uroporphyrinogen-III to yield coproporphyrinogen-III. The protein is Uroporphyrinogen decarboxylase of Novosphingobium aromaticivorans (strain ATCC 700278 / DSM 12444 / CCUG 56034 / CIP 105152 / NBRC 16084 / F199).